The following is a 451-amino-acid chain: Phosphoglucosamine mutase (451 aa).

Ser-101 acts as the Phosphoserine intermediate in catalysis. Mg(2+) is bound by residues Ser-101, Asp-243, Asp-245, and Asp-247. The residue at position 101 (Ser-101) is a Phosphoserine.

The protein belongs to the phosphohexose mutase family. The cofactor is Mg(2+). Activated by phosphorylation.

The enzyme catalyses alpha-D-glucosamine 1-phosphate = D-glucosamine 6-phosphate. Catalyzes the conversion of glucosamine-6-phosphate to glucosamine-1-phosphate. In Geobacter metallireducens (strain ATCC 53774 / DSM 7210 / GS-15), this protein is Phosphoglucosamine mutase.